Reading from the N-terminus, the 264-residue chain is E3 ubiquitin-protein ligase MARCHF8 (264 aa).

Residues 15–47 (LGHSVSRSSNISKAGSPTSVSAPSSFPRTSVTP) form a disordered region. The span at 17-47 (HSVSRSSNISKAGSPTSVSAPSSFPRTSVTP) shows a compositional bias: polar residues. The segment at 45–106 (VTPSSQDICR…ELCKFEFIME (62 aa)) adopts an RING-CH-type zinc-finger fold. Zn(2+) is bound by residues Cys-53, Cys-56, Cys-70, Cys-72, His-80, Cys-83, Cys-96, and Cys-99. A run of 2 helical transmembrane segments spans residues 130–150 (CSVT…YVLI) and 170–190 (FWTK…FMYV).

The protein resides in the cytoplasmic vesicle membrane. It is found in the lysosome membrane. It localises to the early endosome membrane. It carries out the reaction S-ubiquitinyl-[E2 ubiquitin-conjugating enzyme]-L-cysteine + [acceptor protein]-L-lysine = [E2 ubiquitin-conjugating enzyme]-L-cysteine + N(6)-ubiquitinyl-[acceptor protein]-L-lysine.. Its pathway is protein modification; protein ubiquitination. In terms of biological role, E3 ubiquitin-protein ligase that mediates ubiquitination of cd86 and MHC class II proteins, such as hla-dr alpha and beta, and promotes their subsequent endocytosis and sorting to lysosomes via multivesicular bodies. This is E3 ubiquitin-protein ligase MARCHF8 (marchf8) from Xenopus tropicalis (Western clawed frog).